Consider the following 246-residue polypeptide: Alpha-amylase inhibitor 1 (246 aa).

Positions 1 to 23 (MIMASSKLLSLALFLALLSHANS) are cleaved as a signal peptide. Residues Asn-35, Asn-88, and Asn-163 are each glycosylated (N-linked (GlcNAc...) asparagine). Positions 240–246 (IVLNKIL) are excised as a propeptide.

This sequence belongs to the leguminous lectin family. In terms of assembly, heterodimer of chain 1 and chain 2. In terms of processing, proteolytic processing yields active form.

Its function is as follows. Lectin and alpha-amylase inhibitor. Acts as a defensive protein against insects. The sequence is that of Alpha-amylase inhibitor 1 (LLP) from Phaseolus vulgaris (Kidney bean).